The chain runs to 318 residues: UAP56-interacting factor (318 aa).

M1 bears the N-acetylmethionine mark. Positions 1 to 25 (MNRFGTRLVGATATSSPPPKARSNE) are disordered. Residue T14 is modified to Phosphothreonine. A phosphoserine mark is found at S16 and S23. A UAP56-binding motif motif is present at residues 26-44 (NLDKIDMSLDDIIKLNRKE). Residue S61 is modified to Phosphoserine. The interval 79 to 100 (GFGKTSLNRRGRVMPGKRRPNG) is disordered. Residues 85 to 98 (LNRRGRVMPGKRRP) show a composition bias toward basic residues. S118 carries the post-translational modification Phosphoserine. Residue K140 forms a Glycyl lysine isopeptide (Lys-Gly) (interchain with G-Cter in SUMO1) linkage. K261 participates in a covalent cross-link: Glycyl lysine isopeptide (Lys-Gly) (interchain with G-Cter in SUMO2).

This sequence belongs to the UIF family. Interacts with CHTOP. Interacts with DDX39B/UAP56 and NXF1; interaction with DDX39B/UAP56 and NXF1 are mutually exclusive. Interacts with SSRP1; required for its recruitment to mRNAs. As to expression, expressed in a wide variety of cancer types.

It localises to the nucleus. It is found in the nucleoplasm. Its subcellular location is the nucleus speckle. Functionally, required for mRNA export from the nucleus to the cytoplasm. Acts as an adapter that uses the DDX39B/UAP56-NFX1 pathway to ensure efficient mRNA export and delivering to the nuclear pore. Associates with spliced and unspliced mRNAs simultaneously with ALYREF/THOC4. The polypeptide is UAP56-interacting factor (FYTTD1) (Homo sapiens (Human)).